The chain runs to 975 residues: Translation initiation factor IF-2 (975 aa).

Residues 48-63 (DHLRKSHGATDGDKRK) show a composition bias toward basic and acidic residues. Disordered regions lie at residues 48 to 84 (DHLRKSHGATDGDKRKITLTRRHTSEIKQADATGKAR) and 98 to 388 (KRDD…QAPT). Residues 104 to 115 (ETGADQAQAQTD) are compositionally biased toward low complexity. A compositionally biased stretch (basic and acidic residues) spans 120–177 (AELKRREEEARREAELLEKQAQELRERQERLEREEAERRAREEAAEAERRRAEEEAAA). The span at 178-211 (KRAAAAQAEAAQQAAAAREQAQRAQSEPAEQSAQ) shows a compositional bias: low complexity. Residues 212-263 (DEARAAAERAAQREAAKKAEDAAREAADKARAEQEEIRKRREAAEAEARAIR) are compositionally biased toward basic and acidic residues. A compositionally biased stretch (low complexity) spans 302 to 330 (KPAGEAAAARPAAKKPASGAPAPAAAPAG). A compositionally biased stretch (gly residues) spans 359 to 372 (SSGGVDRGWRGGPK). A tr-type G domain is found at 475 to 644 (PRPPVVTVMG…LLQAEVLELK (170 aa)). The segment at 484–491 (GHVDHGKT) is G1. 484-491 (GHVDHGKT) is a GTP binding site. The interval 509–513 (GITQH) is G2. Positions 530 to 533 (DTPG) are G3. Residues 530-534 (DTPGH) and 584-587 (NKID) contribute to the GTP site. The interval 584–587 (NKID) is G4. A G5 region spans residues 620-622 (SAK).

This sequence belongs to the TRAFAC class translation factor GTPase superfamily. Classic translation factor GTPase family. IF-2 subfamily.

It localises to the cytoplasm. Its function is as follows. One of the essential components for the initiation of protein synthesis. Protects formylmethionyl-tRNA from spontaneous hydrolysis and promotes its binding to the 30S ribosomal subunits. Also involved in the hydrolysis of GTP during the formation of the 70S ribosomal complex. This chain is Translation initiation factor IF-2, found in Burkholderia mallei (strain NCTC 10247).